The chain runs to 115 residues: U3-lycotoxin-Ls1u (115 aa).

The N-terminal stretch at 1–20 (MKFVLLFGVLLVTLFSYSSA) is a signal peptide. The propeptide occupies 21–44 (EMLDDFDQADEDELLSLIEKEEAR). 3 cysteine pairs are disulfide-bonded: cysteine 48-cysteine 63, cysteine 55-cysteine 72, and cysteine 62-cysteine 87.

The protein belongs to the neurotoxin 19 (CSTX) family. 01 subfamily. Expressed by the venom gland.

Its subcellular location is the secreted. In Lycosa singoriensis (Wolf spider), this protein is U3-lycotoxin-Ls1u.